The following is a 351-amino-acid chain: Tropomodulin-2 (351 aa).

Position 25 is a phosphoserine (Ser-25).

Belongs to the tropomodulin family. As to quaternary structure, binds to the N-terminus of tropomyosin and to actin. Neuronal-tissue specific.

It is found in the cytoplasm. It localises to the cytoskeleton. Functionally, blocks the elongation and depolymerization of the actin filaments at the pointed end. The Tmod/TM complex contributes to the formation of the short actin protofilament, which in turn defines the geometry of the membrane skeleton. This is Tropomodulin-2 (TMOD2) from Homo sapiens (Human).